Reading from the N-terminus, the 744-residue chain is Tripartite motif-containing protein 2 (744 aa).

Residue Ser10 is modified to Phosphoserine. The RING-type zinc finger occupies 23-64 (CSICLERYKNPKVLPCLHTFCERCLQNYIPAHSLTLSCPVCR). Residues 113-154 (GKPLSCPNHDGNVMEFYCQSCETAMCRECTEGEHAEHPTVPL) form a B box-type zinc finger. The Zn(2+) site is built by Cys118, His121, Cys141, and His146. The stretch at 320-421 (TTNAVASETV…IRGSPFKLKV (102 aa)) is one Filamin repeat. The residue at position 371 (Thr371) is a Phosphothreonine. Phosphoserine occurs at positions 375, 424, and 428. The interval 432 to 462 (EGVKRRVKSPGSGHVKQKAVKRPASMYSTGK) is disordered. NHL repeat units lie at residues 473 to 516 (IFRV…FSND), 520 to 563 (KSRF…FSSD), 564 to 605 (GKFK…FQPN), 609 to 652 (VTRF…FNQE), 656 to 699 (MLKF…FDGS), and 700 to 743 (GSFL…YRYL).

The protein belongs to the TRIM/RBCC family. Forms homooligomers. Interacts with TRIM3; this interaction reduces TRIM2 activity. Interacts with myosin V; myosin V may not be a substrate for ubiquitination. Interacts with NEFL. Interacts with phosphorylated BCL2L11. Interacts with SIRPA. Post-translationally, RING-type zinc finger-dependent and UBE2D1-dependent autoubiquitination.

The protein resides in the cytoplasm. The catalysed reaction is S-ubiquitinyl-[E2 ubiquitin-conjugating enzyme]-L-cysteine + [acceptor protein]-L-lysine = [E2 ubiquitin-conjugating enzyme]-L-cysteine + N(6)-ubiquitinyl-[acceptor protein]-L-lysine.. It participates in protein modification; protein ubiquitination. Its function is as follows. UBE2D1-dependent E3 ubiquitin-protein ligase that mediates the ubiquitination of NEFL and of phosphorylated BCL2L11. Plays a neuroprotective function. May play a role in neuronal rapid ischemic tolerance. Plays a role in antiviral immunity and limits New World arenavirus infection independently of its ubiquitin ligase activity. The chain is Tripartite motif-containing protein 2 (TRIM2) from Homo sapiens (Human).